The primary structure comprises 1019 residues: Macrophage colony-stimulating factor 1 receptor 2 (1019 aa).

Positions 1-18 (MKSYCLLLSITLSCCCSA) are cleaved as a signal peptide. The Extracellular segment spans residues 19–576 (EDLPDPPSIH…LREHNSAFMS (558 aa)). Ig-like C2-type domains are found at residues 37–109 (QAEA…IHLY), 106–212 (IHLY…LLVA), and 224–312 (QNKA…LIVL). Cys52 and Cys92 form a disulfide bridge. N-linked (GlcNAc...) asparagine glycans are attached at residues Asn96, Asn148, Asn169, Asn249, Asn342, Asn346, Asn355, Asn369, Asn379, Asn408, Asn422, Asn429, Asn433, and Asn514. Intrachain disulfides connect Cys139-Cys193 and Cys239-Cys294. Ig-like C2-type domains are found at residues 383-474 (STTV…LRIY) and 487-567 (TLTC…VFHL). A disulfide bridge connects residues Cys490 and Cys552. The helical transmembrane segment at 577 to 597 (ALIGAGSTAAILFLLLLVVFY) threads the bilayer. At 598–1019 (KWRQKPKYEI…LSVTNIYQLS (422 aa)) the chain is on the cytoplasmic side. Residues 601 to 633 (QKPKYEIRWKIIESTEGNHYTFVDPTLLPYNYK) are regulatory juxtamembrane domain. The residue at position 620 (Tyr620) is a Phosphotyrosine; by autocatalysis. Residues 641–963 (LRLGAVLGSG…MICQLIDRLL (323 aa)) enclose the Protein kinase domain. ATP is bound by residues 647-655 (LGSGAFGKV) and Lys674. A phosphotyrosine; by autocatalysis mark is found at Tyr756 and Tyr778. Asp827 acts as the Proton acceptor in catalysis. An activation loop region spans residues 845–867 (DFGLARDIQNDDSYIVQGNARLP). 2 positions are modified to phosphotyrosine; by autocatalysis: Tyr858 and Tyr974. A disordered region spans residues 970–1001 (NHQSYSNINETKKDDFKGGKSQRRGEEEEQRR). Over residues 979-1001 (ETKKDDFKGGKSQRRGEEEEQRR) the composition is skewed to basic and acidic residues. Tyr1016 is modified (phosphotyrosine; by autocatalysis).

Belongs to the protein kinase superfamily. Tyr protein kinase family. CSF-1/PDGF receptor subfamily. As to quaternary structure, monomer. Homodimer. Interacts with CSF1. Post-translationally, autophosphorylated in response to CSF1 binding. autophosphorylation, leading to its degradation. Ubiquitinated. Becomes rapidly polyubiquitinated after autophosphorylation, leading to its degradation.

It is found in the cell membrane. The enzyme catalyses L-tyrosyl-[protein] + ATP = O-phospho-L-tyrosyl-[protein] + ADP + H(+). With respect to regulation, present in an inactive conformation in the absence of bound ligand. CSF1 binding leads to dimerization and activation by autophosphorylation on tyrosine residues. Functionally, tyrosine-protein kinase that acts as a cell-surface receptor for CSF1 and plays an essential role in the regulation of survival, proliferation and differentiation of hematopoietic precursor cells, especially mononuclear phagocytes, such as macrophages and monocytes. Plays an important role in innate immunity and in inflammatory processes. Plays an important role in the regulation of osteoclast proliferation and differentiation, the regulation of bone resorption, and is required for normal bone development. Promotes reorganization of the actin cytoskeleton, regulates formation of membrane ruffles, cell adhesion and cell migration. Activates several signaling pathways in response to ligand binding. The chain is Macrophage colony-stimulating factor 1 receptor 2 (csf1r2) from Takifugu rubripes (Japanese pufferfish).